The primary structure comprises 36 residues: Pancreatic polypeptide (36 aa).

At Tyr-36 the chain carries Tyrosine amide.

Belongs to the NPY family.

The protein resides in the secreted. Its function is as follows. Hormone secreted by pancreatic cells that acts as a regulator of pancreatic and gastrointestinal functions probably by signaling through the G protein-coupled receptor NPY4R2. The sequence is that of Pancreatic polypeptide (PPY) from Chinchilla chinchilla (Short-tailed chinchilla).